An 87-amino-acid chain; its full sequence is Small ribosomal subunit protein uS15 (87 aa).

Belongs to the universal ribosomal protein uS15 family. In terms of assembly, part of the 30S ribosomal subunit. Forms a bridge to the 50S subunit in the 70S ribosome, contacting the 23S rRNA.

One of the primary rRNA binding proteins, it binds directly to 16S rRNA where it helps nucleate assembly of the platform of the 30S subunit by binding and bridging several RNA helices of the 16S rRNA. In terms of biological role, forms an intersubunit bridge (bridge B4) with the 23S rRNA of the 50S subunit in the ribosome. The chain is Small ribosomal subunit protein uS15 from Alkaliphilus oremlandii (strain OhILAs) (Clostridium oremlandii (strain OhILAs)).